A 369-amino-acid polypeptide reads, in one-letter code: uncharacterized protein (369 aa).

Lysine 184 carries the post-translational modification N6-(pyridoxal phosphate)lysine.

This sequence belongs to the class-V pyridoxal-phosphate-dependent aminotransferase family. Pyridoxal 5'-phosphate serves as cofactor.

This is an uncharacterized protein from Helicobacter pylori (strain J99 / ATCC 700824) (Campylobacter pylori J99).